Reading from the N-terminus, the 442-residue chain is tRNA modification GTPase MnmE (442 aa).

Residues Arg-27, Glu-84, and Lys-124 each coordinate (6S)-5-formyl-5,6,7,8-tetrahydrofolate. The TrmE-type G domain maps to 221-366 (GLHVVIVGAP…LLDALQAFAE (146 aa)). GTP-binding positions include 231 to 236 (NAGKSS), 250 to 256 (SEEAGTT), and 275 to 278 (DTAG). Residues Ser-235 and Thr-256 each contribute to the Mg(2+) site. Position 442 (Lys-442) interacts with (6S)-5-formyl-5,6,7,8-tetrahydrofolate.

This sequence belongs to the TRAFAC class TrmE-Era-EngA-EngB-Septin-like GTPase superfamily. TrmE GTPase family. As to quaternary structure, homodimer. Heterotetramer of two MnmE and two MnmG subunits. It depends on K(+) as a cofactor.

It localises to the cytoplasm. Its function is as follows. Exhibits a very high intrinsic GTPase hydrolysis rate. Involved in the addition of a carboxymethylaminomethyl (cmnm) group at the wobble position (U34) of certain tRNAs, forming tRNA-cmnm(5)s(2)U34. This chain is tRNA modification GTPase MnmE, found in Brucella suis (strain ATCC 23445 / NCTC 10510).